A 683-amino-acid polypeptide reads, in one-letter code: Phosphomethylpyrimidine synthase (683 aa).

Substrate-binding positions include Asn235, Met264, Tyr293, His329, 349–351, 390–393, and Glu429; these read SRG and DGMR. Zn(2+) is bound at residue His433. A substrate-binding site is contributed by Tyr456. His497 serves as a coordination point for Zn(2+). Cys577, Cys580, and Cys585 together coordinate [4Fe-4S] cluster. A disordered region spans residues 647–683; it reads RQSPGVESTSLESTSLESTVLESTSLESTALEKAKEV. Low complexity predominate over residues 653 to 675; sequence ESTSLESTSLESTVLESTSLEST.

Belongs to the ThiC family. Homodimer. The cofactor is [4Fe-4S] cluster.

The catalysed reaction is 5-amino-1-(5-phospho-beta-D-ribosyl)imidazole + S-adenosyl-L-methionine = 4-amino-2-methyl-5-(phosphooxymethyl)pyrimidine + CO + 5'-deoxyadenosine + formate + L-methionine + 3 H(+). Its pathway is cofactor biosynthesis; thiamine diphosphate biosynthesis. Its function is as follows. Catalyzes the synthesis of the hydroxymethylpyrimidine phosphate (HMP-P) moiety of thiamine from aminoimidazole ribotide (AIR) in a radical S-adenosyl-L-methionine (SAM)-dependent reaction. The chain is Phosphomethylpyrimidine synthase from Shewanella loihica (strain ATCC BAA-1088 / PV-4).